Consider the following 273-residue polypeptide: Undecaprenyl-diphosphatase (273 aa).

The next 7 membrane-spanning stretches (helical) occupy residues 39 to 59 (SGLT…VVYF), 86 to 106 (LPFL…LFET), 117 to 137 (LLIG…DLFG), 146 to 166 (VTVS…IPGV), 189 to 209 (FSFL…MLHL), 220 to 240 (LPLA…VAFL), and 249 to 269 (IAPF…VILT).

Belongs to the UppP family.

It is found in the cell inner membrane. The enzyme catalyses di-trans,octa-cis-undecaprenyl diphosphate + H2O = di-trans,octa-cis-undecaprenyl phosphate + phosphate + H(+). Its function is as follows. Catalyzes the dephosphorylation of undecaprenyl diphosphate (UPP). Confers resistance to bacitracin. This chain is Undecaprenyl-diphosphatase, found in Pelobacter propionicus (strain DSM 2379 / NBRC 103807 / OttBd1).